Reading from the N-terminus, the 356-residue chain is Phosphate acyltransferase (356 aa).

This sequence belongs to the PlsX family. As to quaternary structure, homodimer. Probably interacts with PlsY.

Its subcellular location is the cytoplasm. The catalysed reaction is a fatty acyl-[ACP] + phosphate = an acyl phosphate + holo-[ACP]. Its pathway is lipid metabolism; phospholipid metabolism. Catalyzes the reversible formation of acyl-phosphate (acyl-PO(4)) from acyl-[acyl-carrier-protein] (acyl-ACP). This enzyme utilizes acyl-ACP as fatty acyl donor, but not acyl-CoA. The polypeptide is Phosphate acyltransferase (Escherichia coli (strain K12 / DH10B)).